The sequence spans 209 residues: MGNGKSIAGDQKAVPTQETHVWYRTFMMEYPSGLQTLHEFKTLLGLQGLNQKANKHIDQVYNTFDTNKDGFVDFLEFIAAVNLIMQEKMEQKLKWYFKLYDADGNGSIDKNELLDMFMAVQALNGQQTLSPEEFINLVFHKIDINNDGELTLEEFINGMAKDQDLLEIVYKSFDFSNVLRVICNGKQPDMETDSSKSPDKAGLGKVKMK.

A lipid anchor (N-myristoyl glycine) is attached at Gly-2. Asn-3 is modified (deamidated asparagine). 4 consecutive EF-hand domains span residues 15 to 50, 52 to 87, 88 to 123, and 130 to 165; these read PTQETHVWYRTFMMEYPSGLQTLHEFKTLLGLQGLN, KANKHIDQVYNTFDTNKDGFVDFLEFIAAVNLIMQE, KMEQKLKWYFKLYDADGNGSIDKNELLDMFMAVQAL, and SPEEFINLVFHKIDINNDGELTLEEFINGMAKDQDL. Ca(2+) contacts are provided by Asp-65, Asn-67, Asp-69, Glu-76, Asp-101, Asp-103, Asn-105, Ser-107, Glu-112, Asp-143, Asn-145, Asp-147, Glu-149, and Glu-154. Residues 187-209 form a disordered region; the sequence is QPDMETDSSKSPDKAGLGKVKMK.

Retina.

Functionally, stimulates guanylyl cyclase 1 (GC1) and GC2 when free calcium ions concentration is low and inhibits guanylyl cyclases when free calcium ions concentration is elevated. This Ca(2+)-sensitive regulation of guanylyl cyclase (GC) is a key event in recovery of the dark state of rod photoreceptors following light exposure. The protein is Guanylyl cyclase-activating protein 3 (GUCA1C) of Homo sapiens (Human).